The chain runs to 112 residues: MALYEHVVITRPDISPAQVESFIEEMTTFLKEKGATVGKTEYWGLRSLAYPIKKQRKGHYSLINIDGPADAIHELERRQRIAEDVMRYMTVRVETLSDEPSPVLSRKERRRD.

It belongs to the bacterial ribosomal protein bS6 family.

Its function is as follows. Binds together with bS18 to 16S ribosomal RNA. This is Small ribosomal subunit protein bS6 from Hyphomonas neptunium (strain ATCC 15444).